The chain runs to 264 residues: ELL-associated factor 2 (264 aa).

Disordered regions lie at residues 114–154 (EGSS…PSSP) and 169–264 (MDQL…DSDD). The segment covering 117–142 (SKVQSRIEQQQQQIRNSSKTPNNIKN) has biased composition (polar residues). Low complexity predominate over residues 173–196 (SSSDSSSDSKSSSSSSSSSENSSS). Positions 228–238 (VPDKDASHNRS) are enriched in basic and acidic residues. The segment covering 239 to 264 (QENSGHMMNTLRSDLQLSESGSDSDD) has biased composition (polar residues).

It belongs to the EAF family.

The protein localises to the nucleus speckle. In terms of biological role, may act as a transcriptional transactivator. The protein is ELL-associated factor 2 (EAF2) of Gallus gallus (Chicken).